A 165-amino-acid chain; its full sequence is Transcription antitermination protein NusB (165 aa).

Belongs to the NusB family.

Involved in transcription antitermination. Required for transcription of ribosomal RNA (rRNA) genes. Binds specifically to the boxA antiterminator sequence of the ribosomal RNA (rrn) operons. In Bradyrhizobium diazoefficiens (strain JCM 10833 / BCRC 13528 / IAM 13628 / NBRC 14792 / USDA 110), this protein is Transcription antitermination protein NusB.